Reading from the N-terminus, the 124-residue chain is Probable 5-hydroxyisourate hydrolase (124 aa).

Substrate contacts are provided by H16, R57, and Y121.

It belongs to the transthyretin family. 5-hydroxyisourate hydrolase subfamily. In terms of assembly, homotetramer.

The catalysed reaction is 5-hydroxyisourate + H2O = 5-hydroxy-2-oxo-4-ureido-2,5-dihydro-1H-imidazole-5-carboxylate + H(+). In terms of biological role, catalyzes the hydrolysis of 5-hydroxyisourate (HIU) to 2-oxo-4-hydroxy-4-carboxy-5-ureidoimidazoline (OHCU). The chain is Probable 5-hydroxyisourate hydrolase from Schizosaccharomyces pombe (strain 972 / ATCC 24843) (Fission yeast).